We begin with the raw amino-acid sequence, 1016 residues long: Poly [ADP-ribose] polymerase 1 (1016 aa).

At Ala-2 the chain carries N-acetylalanine. A PARP-type 1 zinc finger spans residues 9 to 93 (YRVEYAKSGR…TIKKMAETGG (85 aa)). Residues Cys-21 and Cys-24 each coordinate Zn(2+). Position 41 is a phosphoserine (Ser-41). The Zn(2+) site is built by His-53 and Cys-56. N6-acetyllysine occurs at positions 100 and 108. The PARP-type 2 zinc finger occupies 116–206 (FGAGYAKSNR…TLKKQLPAIK (91 aa)). 2 residues coordinate Zn(2+): Cys-128 and Cys-131. Lys-134 carries the post-translational modification N6-acetyllysine. 2 residues coordinate Zn(2+): His-162 and Cys-165. A phosphoserine mark is found at Ser-180 and Ser-188. A Glycyl lysine isopeptide (Lys-Gly) (interchain with G-Cter in SUMO1); alternate cross-link involves residue Lys-206. Lys-206 is covalently cross-linked (Glycyl lysine isopeptide (Lys-Gly) (interchain with G-Cter in SUMO2); alternate). 2 short sequence motifs (nuclear localization signal) span residues 210–212 (KRK) and 224–229 (KKKSKK). Residues 228–362 (KKEKDKEIKL…IKKQDRIFPP (135 aa)) form the PADR1 zinc-binding domain. Lys-252 participates in a covalent cross-link: Glycyl lysine isopeptide (Lys-Gly) (interchain with G-Cter in SUMO2). Phosphoserine is present on residues Ser-277 and Ser-280. Residues 293 to 335 (GALLPCEECSGQLVFKGDAYYCTGDVTAWTKCMVKTQTPNRKE) are zinc ribbon. Residues Cys-298, Cys-301, Cys-314, and Cys-324 each contribute to the Zn(2+) site. The disordered stretch occupies residues 360 to 390 (FPPESSTPVGAAAPPSAASAPAAVHSGPPDK). The segment covering 365–386 (STPVGAAAPPSAASAPAAVHSG) has biased composition (low complexity). The tract at residues 376 to 526 (AASAPAAVHS…GTNKSEKRMK (151 aa)) is automodification domain. In terms of domain architecture, BRCT spans 387-478 (PPDKPLSNMK…KSLQELLSTH (92 aa)). The residue at position 389 (Asp-389) is a PolyADP-ribosyl aspartic acid. 7 positions are modified to polyADP-ribosyl glutamic acid: Glu-409, Glu-415, Glu-437, Glu-446, Glu-447, Glu-450, and Glu-458. Lys-469 is covalently cross-linked (Glycyl lysine isopeptide (Lys-Gly) (interchain with G-Cter in SUMO2)). 2 positions are modified to polyADP-ribosyl glutamic acid: Glu-473 and Glu-486. Residue Lys-488 forms a Glycyl lysine isopeptide (Lys-Gly) (interchain with G-Cter in SUMO1); alternate linkage. Lys-488 is covalently cross-linked (Glycyl lysine isopeptide (Lys-Gly) (interchain with G-Cter in SUMO2); alternate). PolyADP-ribosyl glutamic acid is present on residues Glu-490 and Glu-493. The tract at residues 494 to 523 (AVGPKGKSGAAPSKKSKGPVKEEGTNKSEK) is disordered. The segment covering 496-506 (GPKGKSGAAPS) has biased composition (low complexity). Ser-501, Ser-506, and Ser-509 each carry ADP-ribosylserine. Over residues 512–523 (PVKEEGTNKSEK) the composition is skewed to basic and acidic residues. Lys-514 is covalently cross-linked (Glycyl lysine isopeptide (Lys-Gly) (interchain with G-Cter in SUMO2)). 2 positions are modified to polyADP-ribosyl glutamic acid: Glu-515 and Glu-516. Ser-521 carries the ADP-ribosylserine modification. Glu-522 carries the post-translational modification PolyADP-ribosyl glutamic acid. Position 523 is an N6-(ADP-ribosyl)lysine (Lys-523). A Glycyl lysine isopeptide (Lys-Gly) (interchain with G-Cter in SUMO2) cross-link involves residue Lys-530. In terms of domain architecture, WGR spans 544 to 640 (NAHVLEKGGK…KNFTKHPKKF (97 aa)). Residue Thr-596 is modified to Phosphothreonine. N6-acetyllysine is present on residues Lys-602 and Lys-623. The region spanning 664-781 (KSKLPKPVQN…DIEVAYSLLR (118 aa)) is the PARP alpha-helical domain. Lys-750 participates in a covalent cross-link: Glycyl lysine isopeptide (Lys-Gly) (interchain with G-Cter in SUMO1); alternate. Residue Lys-750 forms a Glycyl lysine isopeptide (Lys-Gly) (interchain with G-Cter in SUMO2); alternate linkage. Residues Ser-784 and Ser-788 each carry the phosphoserine modification. The 227-residue stretch at 790–1016 (DPIDVNYEKL…LKFNFKTSLW (227 aa)) folds into the PARP catalytic domain. NAD(+) is bound by residues 864–866 (HGS), Gly-873, Arg-880, and Ser-906. Glu-990 acts as the For poly [ADP-ribose] polymerase activity in catalysis.

Belongs to the ARTD/PARP family. In terms of assembly, homodimer; PARP-type zinc-fingers from separate PARP1 molecules form a dimer module that specifically recognizes DNA strand breaks. Heterodimer; heterodimerizes with PARP2. Interacts (via the PARP catalytic domain) with HPF1. Interacts with NMNAT1. Interacts with nucleosomes; with a preference for nucleosomes containing H2A.X. Interacts with APTX. Component of a base excision repair (BER) complex, containing at least XRCC1, PARP1, PARP2, POLB and LRIG3. Interacts with SRY. The SWAP complex consists of NPM1, NCL, PARP1 and SWAP70. Interacts with TIAM2. Interacts with PARP3; leading to activate PARP1 in absence of DNA. Interacts (when poly-ADP-ribosylated) with CHD1L (via macro domain). Interacts with the DNA polymerase alpha catalytic subunit POLA1; this interaction functions as part of the control of replication fork progression. Interacts with EEF1A1 and TXK. Interacts with RNF4. Interacts with RNF146. Interacts with ZNF423. Interacts with APLF. Interacts with SNAI1 (via zinc fingers); the interaction requires SNAI1 to be poly-ADP-ribosylated and non-phosphorylated (active) by GSK3B. Interacts (when poly-ADP-ribosylated) with PARP9. Interacts with NR4A3; activates PARP1 by improving acetylation of PARP1 and suppressing the interaction between PARP1 and SIRT1. Interacts (via catalytic domain) with PUM3; the interaction inhibits the poly-ADP-ribosylation activity of PARP1 and the degradation of PARP1 by CASP3 following genotoxic stress. Interacts with ZNF365. Interacts with RRP1B. Interacts with TIMELESS; the interaction is direct. Interacts with CGAS; leading to impede the formation of the PARP1-TIMELESS complex. Interacts with KHDC3L, the interaction is increased following the formation of DNA double-strand breaks. Interacts (when auto-poly-ADP-ribosylated) with XRCC1; leading to inhibit PARP1 ADP-ribosyltransferase activity. Interacts with SPINDOC; promoting PARP1 ADP-ribosyltransferase activity. Interacts with BANF1; leading to inhibit PARP1 ADP-ribosyltransferase activity in response to oxidative DNA damage. Interacts (when sumoylated and ubiquitinated) with VCP/p97; leading to its extraction from chromatin. Interacts with YARS1; promoting PARP1 ADP-ribosyltransferase activity. Interacts with PACMP micropeptide; Interacts with PACMP micropeptide; interaction. Interacts (when poly-ADP-ribosylated) with isoform 1 of MACROH2A1; MACROH2A1 specifically binds to poly-ADP-ribose chains and inhibits PARP1 activity, limiting the consumption of nuclear NAD(+). Interacts with CARM1; promoting recruitment to replication forks. Interacts with RECQL. Interacts with ZNF32; the interaction reshapes ZNF432 interacting proteins. Interacts with TPRN; TPRN interacts with a number of DNA damage response proteins, is recruited to sites of DNA damage and may play a role in DNA damage repair. Interacts (when auto-poly-ADP-ribosylated) with AIFM1. Post-translationally, poly-ADP-ribosylated on serine, glutamate and aspartate residues by autocatalysis. Auto-ADP-ribosylation on serine takes place following interaction with HPF1. Auto poly-ADP-ribosylation on serine residues promotes its dissociation from chromatin. Poly-ADP-ribosylated by PARP2; poly-ADP-ribosylation mediates the recruitment of CHD1L to DNA damage sites. Mono-ADP-ribosylated at Lys-523 by SIRT6 in response to oxidative stress, promoting recruitment to double-strand breaks (DSBs) sites. In terms of processing, S-nitrosylated, leading to inhibit transcription regulation activity. Phosphorylated at Thr-596 by PRKDC in response to DNA damage following virus infection, promoting its translocation to the cytosol. Phosphorylated by TXK. Post-translationally, proteolytically cleaved by caspase-3 (CASP3) and caspase-7 (CASP7) in response to apoptosis to generate the Poly [ADP-ribose] polymerase 1, processed N-terminus and Poly [ADP-ribose] polymerase 1, processed C-terminus forms. In terms of processing, sumoylated with SUMO1 or SUMO2 by PIAS4 following prolonged residence (trapping) to chromatin. Sumoylation promotes ubiquitination by RNF4 and removal from chromatin by VCP/p97. Ubiquitinated by RNF4 following sumoylation by PIAS4 in response to prolonged residence (trapping) to chromatin. Ubiquitination promotes removal from chromatin by VCP/p97.

The protein localises to the chromosome. Its subcellular location is the nucleus. It localises to the nucleolus. It is found in the cytoplasm. The protein resides in the cytosol. It carries out the reaction NAD(+) + (ADP-D-ribosyl)n-acceptor = nicotinamide + (ADP-D-ribosyl)n+1-acceptor + H(+).. The catalysed reaction is L-seryl-[protein] + NAD(+) = O-(ADP-D-ribosyl)-L-seryl-[protein] + nicotinamide + H(+). The enzyme catalyses L-aspartyl-[protein] + NAD(+) = 4-O-(ADP-D-ribosyl)-L-aspartyl-[protein] + nicotinamide. It catalyses the reaction L-glutamyl-[protein] + NAD(+) = 5-O-(ADP-D-ribosyl)-L-glutamyl-[protein] + nicotinamide. It carries out the reaction L-tyrosyl-[protein] + NAD(+) = O-(ADP-D-ribosyl)-L-tyrosyl-[protein] + nicotinamide + H(+). The catalysed reaction is L-histidyl-[protein] + NAD(+) = N(tele)-(ADP-D-ribosyl)-L-histidyl-[protein] + nicotinamide + H(+). With respect to regulation, ADP-ribosyltransferase activity is regulated via an allosteric activation mechanism. In absence of activation signal, PARP1 is autoinhibited by the PARP alpha-helical domain (also named HD region), which prevents effective NAD(+)-binding. Activity is highly stimulated by signals, such as DNA strand breaks. Binding to damaged DNA unfolds the PARP alpha-helical domain, relieving autoinhibition. Poly-ADP-ribosyltransferase activity is tightly regulated and PARP1 is removed from damaged chromatin following initial poly-ADP-ribosylation of chromatin to avoid prolonged residence (trapping) that has cytotoxic consequences. A number of factors (VCP/p97) or post-translational modifications (auto-poly-ADP-ribosylation or ubiquitination) promote PARP1 removal from chromatin. In terms of biological role, poly-ADP-ribosyltransferase that mediates poly-ADP-ribosylation of proteins and plays a key role in DNA repair. Mediates glutamate, aspartate, serine, histidine or tyrosine ADP-ribosylation of proteins: the ADP-D-ribosyl group of NAD(+) is transferred to the acceptor carboxyl group of target residues and further ADP-ribosyl groups are transferred to the 2'-position of the terminal adenosine moiety, building up a polymer with an average chain length of 20-30 units. Serine ADP-ribosylation of proteins constitutes the primary form of ADP-ribosylation of proteins in response to DNA damage. Specificity for the different amino acids is conferred by interacting factors, such as HPF1 and NMNAT1. Following interaction with HPF1, catalyzes serine ADP-ribosylation of target proteins; HPF1 confers serine specificity by completing the PARP1 active site. Also catalyzes tyrosine ADP-ribosylation of target proteins following interaction with HPF1. Following interaction with NMNAT1, catalyzes glutamate and aspartate ADP-ribosylation of target proteins; NMNAT1 confers glutamate and aspartate specificity. PARP1 initiates the repair of DNA breaks: recognizes and binds DNA breaks within chromatin and recruits HPF1, licensing serine ADP-ribosylation of target proteins, such as histones (H2BS6ADPr and H3S10ADPr), thereby promoting decompaction of chromatin and the recruitment of repair factors leading to the reparation of DNA strand breaks. HPF1 initiates serine ADP-ribosylation but restricts the polymerase activity of PARP1 in order to limit the length of poly-ADP-ribose chains. In addition to base excision repair (BER) pathway, also involved in double-strand breaks (DSBs) repair: together with TIMELESS, accumulates at DNA damage sites and promotes homologous recombination repair by mediating poly-ADP-ribosylation. Mediates the poly-ADP-ribosylation of a number of proteins, including itself, APLF, CHFR and NFAT5. In addition to proteins, also able to ADP-ribosylate DNA: catalyzes ADP-ribosylation of DNA strand break termini containing terminal phosphates and a 2'-OH group in single- and double-stranded DNA, respectively. Required for PARP9 and DTX3L recruitment to DNA damage sites. PARP1-dependent PARP9-DTX3L-mediated ubiquitination promotes the rapid and specific recruitment of 53BP1/TP53BP1, UIMC1/RAP80, and BRCA1 to DNA damage sites. PARP1-mediated DNA repair in neurons plays a role in sleep: senses DNA damage in neurons and promotes sleep, facilitating efficient DNA repair. In addition to DNA repair, also involved in other processes, such as transcription regulation, programmed cell death, membrane repair, adipogenesis and innate immunity. Acts as a repressor of transcription: binds to nucleosomes and modulates chromatin structure in a manner similar to histone H1, thereby altering RNA polymerase II. Acts both as a positive and negative regulator of transcription elongation, depending on the context. Acts as a positive regulator of transcription elongation by mediating poly-ADP-ribosylation of NELFE, preventing RNA-binding activity of NELFE and relieving transcription pausing. Acts as a negative regulator of transcription elongation in response to DNA damage by catalyzing poly-ADP-ribosylation of CCNT1, disrupting the phase separation activity of CCNT1 and subsequent activation of CDK9. Involved in replication fork progression following interaction with CARM1: mediates poly-ADP-ribosylation at replication forks, slowing fork progression. Poly-ADP-ribose chains generated by PARP1 also play a role in poly-ADP-ribose-dependent cell death, a process named parthanatos. Also acts as a negative regulator of the cGAS-STING pathway. Acts by mediating poly-ADP-ribosylation of CGAS: PARP1 translocates into the cytosol following phosphorylation by PRKDC and catalyzes poly-ADP-ribosylation and inactivation of CGAS. Acts as a negative regulator of adipogenesis: catalyzes poly-ADP-ribosylation of histone H2B on 'Glu-35' (H2BE35ADPr) following interaction with NMNAT1, inhibiting phosphorylation of H2B at 'Ser-36' (H2BS36ph), thereby blocking expression of pro-adipogenetic genes. Involved in the synthesis of ATP in the nucleus, together with NMNAT1, PARG and NUDT5. Nuclear ATP generation is required for extensive chromatin remodeling events that are energy-consuming. Functionally, promotes AIFM1-mediated apoptosis. This form, which translocates into the cytoplasm following cleavage by caspase-3 (CASP3) and caspase-7 (CASP7) in response to apoptosis, is auto-poly-ADP-ribosylated and serves as a poly-ADP-ribose carrier to induce AIFM1-mediated apoptosis. Its function is as follows. This cleavage form irreversibly binds to DNA breaks and interferes with DNA repair, promoting DNA damage-induced apoptosis. The polypeptide is Poly [ADP-ribose] polymerase 1 (PARP1) (Bos taurus (Bovine)).